An 873-amino-acid polypeptide reads, in one-letter code: Valine--tRNA ligase (873 aa).

The 'HIGH' region signature appears at 43 to 53 (PNVTGVLHMGH). Residues 532–536 (KMSKS) carry the 'KMSKS' region motif. Residue lysine 535 participates in ATP binding. Residues 802–873 (LGNLINVEEE…IEESIAALTK (72 aa)) are a coiled coil.

This sequence belongs to the class-I aminoacyl-tRNA synthetase family. ValS type 1 subfamily. Monomer.

It localises to the cytoplasm. It catalyses the reaction tRNA(Val) + L-valine + ATP = L-valyl-tRNA(Val) + AMP + diphosphate. Catalyzes the attachment of valine to tRNA(Val). As ValRS can inadvertently accommodate and process structurally similar amino acids such as threonine, to avoid such errors, it has a 'posttransfer' editing activity that hydrolyzes mischarged Thr-tRNA(Val) in a tRNA-dependent manner. This Parabacteroides distasonis (strain ATCC 8503 / DSM 20701 / CIP 104284 / JCM 5825 / NCTC 11152) protein is Valine--tRNA ligase.